The following is a 181-amino-acid chain: Acireductone dioxygenase 2 (181 aa).

The Fe(2+) site is built by His-97, His-99, Glu-103, and His-141. 4 residues coordinate Ni(2+): His-97, His-99, Glu-103, and His-141.

It belongs to the acireductone dioxygenase (ARD) family. Monomer. Fe(2+) serves as cofactor. Ni(2+) is required as a cofactor.

It catalyses the reaction 1,2-dihydroxy-5-(methylsulfanyl)pent-1-en-3-one + O2 = 3-(methylsulfanyl)propanoate + CO + formate + 2 H(+). The enzyme catalyses 1,2-dihydroxy-5-(methylsulfanyl)pent-1-en-3-one + O2 = 4-methylsulfanyl-2-oxobutanoate + formate + 2 H(+). The protein operates within amino-acid biosynthesis; L-methionine biosynthesis via salvage pathway; L-methionine from S-methyl-5-thio-alpha-D-ribose 1-phosphate: step 5/6. In terms of biological role, catalyzes 2 different reactions between oxygen and the acireductone 1,2-dihydroxy-3-keto-5-methylthiopentene (DHK-MTPene) depending upon the metal bound in the active site. Fe-containing acireductone dioxygenase (Fe-ARD) produces formate and 2-keto-4-methylthiobutyrate (KMTB), the alpha-ketoacid precursor of methionine in the methionine recycle pathway. Ni-containing acireductone dioxygenase (Ni-ARD) produces methylthiopropionate, carbon monoxide and formate, and does not lie on the methionine recycle pathway. This chain is Acireductone dioxygenase 2, found in Pectobacterium atrosepticum (strain SCRI 1043 / ATCC BAA-672) (Erwinia carotovora subsp. atroseptica).